The following is a 75-amino-acid chain: DNA-directed RNA polymerase subunit omega (75 aa).

The protein belongs to the RNA polymerase subunit omega family. In cyanobacteria the RNAP catalytic core is composed of 2 alpha, 1 beta, 1 beta', 1 gamma and 1 omega subunit. When a sigma factor is associated with the core the holoenzyme is formed, which can initiate transcription.

The catalysed reaction is RNA(n) + a ribonucleoside 5'-triphosphate = RNA(n+1) + diphosphate. Its function is as follows. Promotes RNA polymerase assembly. Latches the N- and C-terminal regions of the beta' subunit thereby facilitating its interaction with the beta and alpha subunits. This is DNA-directed RNA polymerase subunit omega from Synechococcus sp. (strain CC9605).